The following is a 117-amino-acid chain: Large ribosomal subunit protein eL8 (117 aa).

This sequence belongs to the eukaryotic ribosomal protein eL8 family. In terms of assembly, part of the 50S ribosomal subunit. Part of the RNase P complex.

It is found in the cytoplasm. The enzyme catalyses Endonucleolytic cleavage of RNA, removing 5'-extranucleotides from tRNA precursor.. Its function is as follows. Multifunctional RNA-binding protein that recognizes the K-turn motif in ribosomal RNA, the RNA component of RNase P, box H/ACA, box C/D and box C'/D' sRNAs. Part of ribonuclease P, a protein complex that generates mature tRNA molecules by cleaving their 5'-ends, this subunit dramatically stimulates RNase P activity. This is Large ribosomal subunit protein eL8 from Methanococcus maripaludis (strain DSM 14266 / JCM 13030 / NBRC 101832 / S2 / LL).